Reading from the N-terminus, the 173-residue chain is Nicotinamide-nucleotide adenylyltransferase (173 aa).

This sequence belongs to the archaeal NMN adenylyltransferase family.

The protein localises to the cytoplasm. The catalysed reaction is beta-nicotinamide D-ribonucleotide + ATP + H(+) = diphosphate + NAD(+). Its pathway is cofactor biosynthesis; NAD(+) biosynthesis; NAD(+) from nicotinamide D-ribonucleotide: step 1/1. In Methanolobus tindarius, this protein is Nicotinamide-nucleotide adenylyltransferase (ffdC).